Consider the following 168-residue polypeptide: Photosystem I assembly protein Ycf3 (168 aa).

TPR repeat units lie at residues 35–68 (AFTY…EIDP), 72–105 (SYIL…NPFL), and 120–153 (GEQA…TPGN).

Belongs to the Ycf3 family.

It localises to the plastid. It is found in the chloroplast thylakoid membrane. Functionally, essential for the assembly of the photosystem I (PSI) complex. May act as a chaperone-like factor to guide the assembly of the PSI subunits. The chain is Photosystem I assembly protein Ycf3 from Solanum tuberosum (Potato).